A 321-amino-acid polypeptide reads, in one-letter code: MSKPIQMEKGVKYRDADKMALIPVKNMPTEQKEVLRKPDWMKIKLPADSQRIQDIKAAMRKNKLHSVCEEASCPNLAECFNHGTATFMILGAICTRRCPFCDVAHGRPLPPEAEEPQKLARTIADMKLKYVVITSVDRDDLRDGGAQHFADCNREIRELNPDIKIETLVPDFRGRMDVALDLMKDNPPDVFNHNLETAPRLYRKARPGANYKWSLELLKKFKEQHPDVPTKSGLMMGLGETKEEIIEVLKDLRAHGVTMLTLGQYLAPSRHHLPVERYVPPSEFDELKEVALELGFTHAACGPFVRSSYHADMQAQGLEIK.

[4Fe-4S] cluster is bound by residues Cys68, Cys73, Cys79, Cys94, Cys98, Cys101, and Ser308. The Radical SAM core domain occupies 80 to 297 (FNHGTATFMI…KEVALELGFT (218 aa)).

The protein belongs to the radical SAM superfamily. Lipoyl synthase family. The cofactor is [4Fe-4S] cluster.

The protein localises to the cytoplasm. The catalysed reaction is [[Fe-S] cluster scaffold protein carrying a second [4Fe-4S](2+) cluster] + N(6)-octanoyl-L-lysyl-[protein] + 2 oxidized [2Fe-2S]-[ferredoxin] + 2 S-adenosyl-L-methionine + 4 H(+) = [[Fe-S] cluster scaffold protein] + N(6)-[(R)-dihydrolipoyl]-L-lysyl-[protein] + 4 Fe(3+) + 2 hydrogen sulfide + 2 5'-deoxyadenosine + 2 L-methionine + 2 reduced [2Fe-2S]-[ferredoxin]. Its pathway is protein modification; protein lipoylation via endogenous pathway; protein N(6)-(lipoyl)lysine from octanoyl-[acyl-carrier-protein]: step 2/2. Functionally, catalyzes the radical-mediated insertion of two sulfur atoms into the C-6 and C-8 positions of the octanoyl moiety bound to the lipoyl domains of lipoate-dependent enzymes, thereby converting the octanoylated domains into lipoylated derivatives. This is Lipoyl synthase from Vibrio parahaemolyticus serotype O3:K6 (strain RIMD 2210633).